A 91-amino-acid chain; its full sequence is Small ribosomal subunit protein uS19 (91 aa).

It belongs to the universal ribosomal protein uS19 family.

Protein S19 forms a complex with S13 that binds strongly to the 16S ribosomal RNA. The protein is Small ribosomal subunit protein uS19 of Synechococcus sp. (strain CC9902).